Reading from the N-terminus, the 156-residue chain is MMSQTLTLCCLALVACVYGNTVSTNDTACPTFCPSIYKPVCGTDGQNFKEFASTCNLLSHNCRRERNSVQAYAATDAAWCSSEFVENLHEKLGNFKLEVKECFKPCSMIYQPVCITNGKYRAELANSCLLENFNCALQVSGAQPAELFRLLREEKC.

The first 19 residues, 1–19 (MMSQTLTLCCLALVACVYG), serve as a signal peptide directing secretion. 2 Kazal-like domains span residues 23-81 (STND…AWCS) and 96-156 (KLEV…EEKC). Intrachain disulfides connect Cys29-Cys62, Cys33-Cys55, Cys102-Cys135, Cys106-Cys128, and Cys114-Cys156.

The chain is Enhancer of split M1 protein (Kaz-m1) from Drosophila melanogaster (Fruit fly).